A 229-amino-acid polypeptide reads, in one-letter code: Ribonuclease 3 (229 aa).

The 123-residue stretch at 5 to 127 folds into the RNase III domain; it reads LDRLERKLGY…LIGAIYQDAD (123 aa). E40 contacts Mg(2+). Residue D44 is part of the active site. 2 residues coordinate Mg(2+): D113 and E116. Residue E116 is part of the active site. One can recognise a DRBM domain in the interval 154 to 224; that stretch reads DPKTRLQEFL…AAAALIALGV (71 aa).

It belongs to the ribonuclease III family. As to quaternary structure, homodimer. Mg(2+) is required as a cofactor.

The protein resides in the cytoplasm. It carries out the reaction Endonucleolytic cleavage to 5'-phosphomonoester.. In terms of biological role, digests double-stranded RNA. Involved in the processing of primary rRNA transcript to yield the immediate precursors to the large and small rRNAs (23S and 16S). Processes some mRNAs, and tRNAs when they are encoded in the rRNA operon. Processes pre-crRNA and tracrRNA of type II CRISPR loci if present in the organism. In Pseudomonas entomophila (strain L48), this protein is Ribonuclease 3.